A 1099-amino-acid chain; its full sequence is Carbamoyl phosphate synthase large chain (1099 aa).

The segment at 1–402 (MPKRTDLKSV…ALQKALRSLE (402 aa)) is carboxyphosphate synthetic domain. Residues arginine 129, arginine 169, glycine 175, glycine 176, glutamate 208, isoleucine 210, glutamate 215, glycine 241, valine 242, histidine 243, glutamine 285, and glutamate 299 each contribute to the ATP site. One can recognise an ATP-grasp 1 domain in the interval 133–328 (KGVVERCGAE…IAKIATKLSL (196 aa)). Glutamine 285, glutamate 299, and asparagine 301 together coordinate Mg(2+). Glutamine 285, glutamate 299, and asparagine 301 together coordinate Mn(2+). The interval 403–546 (QKGSQLDFSH…YHYSSYDEED (144 aa)) is oligomerization domain. The interval 547–950 (EVALHSKPSI…AFAKSQAAAN (404 aa)) is carbamoyl phosphate synthetic domain. One can recognise an ATP-grasp 2 domain in the interval 677–868 (SRVLDEAGLI…MAKAAALIGT (192 aa)). Positions 713, 752, 754, 759, 784, 785, 786, 787, 827, and 839 each coordinate ATP. Positions 827, 839, and 841 each coordinate Mg(2+). Glutamine 827, glutamate 839, and asparagine 841 together coordinate Mn(2+). The MGS-like domain occupies 951–1099 (NALPTEGKIF…AENLKALQNG (149 aa)). Positions 951 to 1099 (NALPTEGKIF…AENLKALQNG (149 aa)) are allosteric domain.

Belongs to the CarB family. In terms of assembly, composed of two chains; the small (or glutamine) chain promotes the hydrolysis of glutamine to ammonia, which is used by the large (or ammonia) chain to synthesize carbamoyl phosphate. Tetramer of heterodimers (alpha,beta)4. Mg(2+) is required as a cofactor. Mn(2+) serves as cofactor.

The catalysed reaction is hydrogencarbonate + L-glutamine + 2 ATP + H2O = carbamoyl phosphate + L-glutamate + 2 ADP + phosphate + 2 H(+). The enzyme catalyses hydrogencarbonate + NH4(+) + 2 ATP = carbamoyl phosphate + 2 ADP + phosphate + 2 H(+). It participates in amino-acid biosynthesis; L-arginine biosynthesis; carbamoyl phosphate from bicarbonate: step 1/1. Its pathway is pyrimidine metabolism; UMP biosynthesis via de novo pathway; (S)-dihydroorotate from bicarbonate: step 1/3. In terms of biological role, large subunit of the glutamine-dependent carbamoyl phosphate synthetase (CPSase). CPSase catalyzes the formation of carbamoyl phosphate from the ammonia moiety of glutamine, carbonate, and phosphate donated by ATP, constituting the first step of 2 biosynthetic pathways, one leading to arginine and/or urea and the other to pyrimidine nucleotides. The large subunit (synthetase) binds the substrates ammonia (free or transferred from glutamine from the small subunit), hydrogencarbonate and ATP and carries out an ATP-coupled ligase reaction, activating hydrogencarbonate by forming carboxy phosphate which reacts with ammonia to form carbamoyl phosphate. In Arthrobacter sp. (strain FB24), this protein is Carbamoyl phosphate synthase large chain.